Reading from the N-terminus, the 875-residue chain is Neurotrypsin (875 aa).

Positions methionine 1–glycine 20 are cleaved as a signal peptide. An N-linked (GlcNAc...) asparagine glycan is attached at asparagine 26. The tract at residues leucine 29–proline 88 is disordered. The span at threonine 56–alanine 71 shows a compositional bias: pro residues. The Kringle domain maps to cysteine 93–cysteine 165. Disulfide bonds link cysteine 93/cysteine 165, cysteine 109/cysteine 149, cysteine 138/cysteine 163, cysteine 195/cysteine 259, cysteine 208/cysteine 269, cysteine 239/cysteine 249, cysteine 305/cysteine 369, cysteine 318/cysteine 379, cysteine 349/cysteine 359, cysteine 412/cysteine 475, cysteine 425/cysteine 485, cysteine 455/cysteine 465, cysteine 525/cysteine 589, cysteine 538/cysteine 599, cysteine 569/cysteine 579, cysteine 619/cysteine 750, cysteine 661/cysteine 677, cysteine 765/cysteine 831, cysteine 794/cysteine 808, and cysteine 821/cysteine 850. SRCR domains follow at residues valine 170–phenylalanine 271, isoleucine 280–proline 381, isoleucine 387–proline 487, and valine 500–tyrosine 601. Residues cysteine 619 to arginine 630 are zymogen activation region. Residues isoleucine 631–lysine 874 enclose the Peptidase S1 domain. Histidine 676 serves as the catalytic Charge relay system. Asparagine 683 is a glycosylation site (N-linked (GlcNAc...) asparagine). Residue aspartate 726 is the Charge relay system of the active site. The active-site Charge relay system is the serine 825.

It belongs to the peptidase S1 family. In terms of tissue distribution, brain and Leydig cells of the testis.

The protein localises to the secreted. Functionally, plays a role in neuronal plasticity and the proteolytic action may subserve structural reorganizations associated with learning and memory operations. In Homo sapiens (Human), this protein is Neurotrypsin (PRSS12).